A 1377-amino-acid polypeptide reads, in one-letter code: DNA-directed RNA polymerase subunit beta' (1377 aa).

Residues Cys-60, Cys-62, Cys-75, and Cys-78 each contribute to the Zn(2+) site. Mg(2+) contacts are provided by Asp-449, Asp-451, and Asp-453. Zn(2+) contacts are provided by Cys-777, Cys-851, Cys-858, and Cys-861.

Belongs to the RNA polymerase beta' chain family. As to quaternary structure, the RNAP catalytic core consists of 2 alpha, 1 beta, 1 beta' and 1 omega subunit. When a sigma factor is associated with the core the holoenzyme is formed, which can initiate transcription. It depends on Mg(2+) as a cofactor. The cofactor is Zn(2+).

The enzyme catalyses RNA(n) + a ribonucleoside 5'-triphosphate = RNA(n+1) + diphosphate. DNA-dependent RNA polymerase catalyzes the transcription of DNA into RNA using the four ribonucleoside triphosphates as substrates. The polypeptide is DNA-directed RNA polymerase subunit beta' (Borreliella burgdorferi (strain ATCC 35210 / DSM 4680 / CIP 102532 / B31) (Borrelia burgdorferi)).